A 333-amino-acid chain; its full sequence is Potassium channel protein 1 (333 aa).

Over 1–6 (METYEK) the chain is Cytoplasmic. Residues 7-27 (IELGIIVIILLILIESVILMT) form a helical membrane-spanning segment. Topologically, residues 28 to 60 (VEGWDFFTAFYTAVVTISTVGYGDYTPQTFLGK) are extracellular. The Selectivity filter signature appears at 46–51 (TVGYGD). Residues 61 to 81 (LSVIIYIFAGVGAVAYTMGNI) form a helical membrane-spanning segment. Residues 82–333 (ASFFIEGHFR…KLKRYVEGVE (252 aa)) lie on the Cytoplasmic side of the membrane. Residues 107–229 (NNHYIICGYG…GADRAVCPYI (123 aa)) enclose the RCK N-terminal domain. One can recognise an RCK C-terminal domain in the interval 246 to 331 (EFIHSLVATE…LEKLKRYVEG (86 aa)).

In terms of assembly, homotetramer.

The protein localises to the cell membrane. Potassium channel protein. Seems to conduct potassium at low membrane potentials. The sequence is that of Potassium channel protein 1 from Methanocaldococcus jannaschii (strain ATCC 43067 / DSM 2661 / JAL-1 / JCM 10045 / NBRC 100440) (Methanococcus jannaschii).